We begin with the raw amino-acid sequence, 477 residues long: MGRTVIVLGGGISGLAASYHLIRGPSPPKVILVEGSKRLGGWIRSIRGSDGAIFELGPRGIRPAGALGARTLLLVSELGLESEVLPVRGDHPAAQNRFLYVGGTLHPLPSGLRGLLRPSPPFSKPLFWAGLRELLKPRGKEPDETVHSFAQRRLGPEVASLAMDSLCRGVFAGNSRELSIRSCFPSLFQAEQTHRSILLGLLLGAGQSPQPDSSLIRQARAERWSQWSLRGGLEVLPQALHNHLASKGVTVLSGQPVCGLSLQPEGRWKVSLGDSSLEADHIISAIPASELSKLLPAEAAPLARILSTIKAVSVAVVNLQYRGACLPVQGFGHLVPSSEDPTVLGIVYDSVAFPEQDGNPPSLRVTVMLGGYWLQKLKAAGHQLSPELFQQQAQEAAATQLGLKEPPSHCLVHLHKNCIPQYTIGHWQKLDSAMQFLTAQRLPLTLAGASYEGVAVNDCIESGRQAAVAVLGTESNS.

Residues 9-14 (GGGISG), W42, 57-60 (GPRG), V257, A449, and 454-456 (VAV) each bind FAD.

This sequence belongs to the protoporphyrinogen/coproporphyrinogen oxidase family. Protoporphyrinogen oxidase subfamily. In terms of assembly, monomer. Homodimer. FAD serves as cofactor.

The protein localises to the mitochondrion inner membrane. The enzyme catalyses protoporphyrinogen IX + 3 O2 = protoporphyrin IX + 3 H2O2. It participates in porphyrin-containing compound metabolism; protoporphyrin-IX biosynthesis; protoporphyrin-IX from protoporphyrinogen-IX: step 1/1. Its activity is regulated as follows. Inhibited by acifluorfen. In terms of biological role, catalyzes the 6-electron oxidation of protoporphyrinogen-IX to form protoporphyrin-IX. This chain is Protoporphyrinogen oxidase (Ppox), found in Mus musculus (Mouse).